The sequence spans 631 residues: tRNA uridine 5-carboxymethylaminomethyl modification enzyme MnmG (631 aa).

FAD is bound at residue 14–19; that stretch reads GGGHAG. Residue 274–288 coordinates NAD(+); it reads GPRYCPSIEDKIHRF.

The protein belongs to the MnmG family. As to quaternary structure, homodimer. Heterotetramer of two MnmE and two MnmG subunits. It depends on FAD as a cofactor.

It is found in the cytoplasm. Its function is as follows. NAD-binding protein involved in the addition of a carboxymethylaminomethyl (cmnm) group at the wobble position (U34) of certain tRNAs, forming tRNA-cmnm(5)s(2)U34. This chain is tRNA uridine 5-carboxymethylaminomethyl modification enzyme MnmG, found in Pseudomonas paraeruginosa (strain DSM 24068 / PA7) (Pseudomonas aeruginosa (strain PA7)).